The chain runs to 639 residues: Mediator of RNA polymerase II transcription subunit 17 (639 aa).

Polar residues predominate over residues 32 to 43; it reads ASATVTTNGTTA. 2 disordered regions span residues 32–68 and 130–159; these read ASAT…EEHS and MGDA…NNDS. The segment covering 48–57 has biased composition (low complexity); sequence DSGSQQSVSS. Residues 58-68 show a composition bias toward polar residues; sequence APIQQNSEEHS. Positions 245–271 form a coiled coil; that stretch reads WKLRSLEDSKALLKENYAKLQKSLEVE.

Belongs to the Mediator complex subunit 17 family. As to quaternary structure, component of the Mediator complex.

It is found in the nucleus. Component of the Mediator complex, a coactivator involved in the regulated transcription of nearly all RNA polymerase II-dependent genes. Mediator functions as a bridge to convey information from gene-specific regulatory proteins to the basal RNA polymerase II transcription machinery. Mediator is recruited to promoters by direct interactions with regulatory proteins and serves as a scaffold for the assembly of a functional preinitiation complex with RNA polymerase II and the general transcription factors. This chain is Mediator of RNA polymerase II transcription subunit 17 (SRB4), found in Eremothecium gossypii (strain ATCC 10895 / CBS 109.51 / FGSC 9923 / NRRL Y-1056) (Yeast).